The chain runs to 352 residues: Protein-glutamate methylesterase/protein-glutamine glutaminase (352 aa).

The 119-residue stretch at 5–123 folds into the Response regulatory domain; it reads RILIVDDSVI…SKEKAIEYIR (119 aa). At aspartate 56 the chain carries 4-aspartylphosphate. Residues 166–352 enclose the CheB-type methylesterase domain; that stretch reads EIVAIGVSTG…LAEEIIRRIG (187 aa). Catalysis depends on residues serine 173, histidine 200, and aspartate 296.

This sequence belongs to the CheB family. Post-translationally, phosphorylated by CheA. Phosphorylation of the N-terminal regulatory domain activates the methylesterase activity.

It localises to the cytoplasm. The enzyme catalyses [protein]-L-glutamate 5-O-methyl ester + H2O = L-glutamyl-[protein] + methanol + H(+). The catalysed reaction is L-glutaminyl-[protein] + H2O = L-glutamyl-[protein] + NH4(+). Its function is as follows. Involved in chemotaxis. Part of a chemotaxis signal transduction system that modulates chemotaxis in response to various stimuli. Catalyzes the demethylation of specific methylglutamate residues introduced into the chemoreceptors (methyl-accepting chemotaxis proteins or MCP) by CheR. Also mediates the irreversible deamidation of specific glutamine residues to glutamic acid. The protein is Protein-glutamate methylesterase/protein-glutamine glutaminase of Trichodesmium erythraeum (strain IMS101).